Consider the following 492-residue polypeptide: Bifunctional purine biosynthesis protein PurH (492 aa).

The MGS-like domain maps to 1–144 (MKKAILSVSN…KNFKHVITVV (144 aa)).

Belongs to the PurH family.

The enzyme catalyses (6R)-10-formyltetrahydrofolate + 5-amino-1-(5-phospho-beta-D-ribosyl)imidazole-4-carboxamide = 5-formamido-1-(5-phospho-D-ribosyl)imidazole-4-carboxamide + (6S)-5,6,7,8-tetrahydrofolate. The catalysed reaction is IMP + H2O = 5-formamido-1-(5-phospho-D-ribosyl)imidazole-4-carboxamide. It participates in purine metabolism; IMP biosynthesis via de novo pathway; 5-formamido-1-(5-phospho-D-ribosyl)imidazole-4-carboxamide from 5-amino-1-(5-phospho-D-ribosyl)imidazole-4-carboxamide (10-formyl THF route): step 1/1. Its pathway is purine metabolism; IMP biosynthesis via de novo pathway; IMP from 5-formamido-1-(5-phospho-D-ribosyl)imidazole-4-carboxamide: step 1/1. This is Bifunctional purine biosynthesis protein PurH from Staphylococcus saprophyticus subsp. saprophyticus (strain ATCC 15305 / DSM 20229 / NCIMB 8711 / NCTC 7292 / S-41).